A 221-amino-acid chain; its full sequence is Thymidylate kinase (221 aa).

Position 10–17 (10–17) interacts with ATP; it reads GIDGAGKT.

This sequence belongs to the thymidylate kinase family.

The catalysed reaction is dTMP + ATP = dTDP + ADP. In terms of biological role, phosphorylation of dTMP to form dTDP in both de novo and salvage pathways of dTTP synthesis. This is Thymidylate kinase from Desulforudis audaxviator (strain MP104C).